We begin with the raw amino-acid sequence, 533 residues long: Zona pellucida sperm-binding protein 3 receptor (533 aa).

The signal sequence occupies residues methionine 1–glycine 28. Sushi domains lie at aspartate 29–lysine 88, lysine 89–isoleucine 150, valine 151–lysine 215, valine 216–proline 275, asparagine 276–arginine 342, valine 343–serine 408, and alanine 409–tryptophan 467. 14 disulfides stabilise this stretch: cysteine 30–cysteine 74, cysteine 60–cysteine 86, cysteine 91–cysteine 132, cysteine 118–cysteine 148, cysteine 153–cysteine 196, cysteine 182–cysteine 213, cysteine 218–cysteine 260, cysteine 246–cysteine 273, cysteine 278–cysteine 328, cysteine 312–cysteine 340, cysteine 345–cysteine 393, cysteine 378–cysteine 406, cysteine 411–cysteine 452, and cysteine 438–cysteine 465. N-linked (GlcNAc...) asparagine glycans are attached at residues asparagine 68 and asparagine 77. 3 N-linked (GlcNAc...) asparagine glycosylation sites follow: asparagine 185, asparagine 191, and asparagine 200. N-linked (GlcNAc...) asparagine glycans are attached at residues asparagine 433 and asparagine 455.

In terms of assembly, homooligomer; disulfide-linked. May contain 6-8 monomers per oligomer. Post-translationally, the N-terminus may be blocked. Testis. Not expressed in heart, brain, liver or kidney.

It is found in the cytoplasmic vesicle. The protein resides in the secretory vesicle. Its subcellular location is the acrosome lumen. Its function is as follows. Probably involved in the formation of the dense core and M1 domain of the acrosome. May also regulate the release of certain secretory proteins following the acrosomal reaction. The sequence is that of Zona pellucida sperm-binding protein 3 receptor (ZP3R) from Cavia porcellus (Guinea pig).